The following is a 483-amino-acid chain: ATP-dependent RNA helicase DDX25 (483 aa).

The short motif at 61-74 (LAANSLLNKLIRQS) is the Nuclear export signal element. The Q motif motif lies at 97–125 (KTFEELRLKEELLKGIYAMGFNRPSKIQE). The Nuclear localization signal signature appears at 100 to 114 (EELRLKEELLKGIYA). The Helicase ATP-binding domain maps to 130–300 (MMLAHPPQNL…ERIIPDPNVI (171 aa)). Residue 143-150 (SQSGTGKT) coordinates ATP. A DEAD box motif is present at residues 247 to 250 (DEAD). The region spanning 311-478 (NIRQYYVLCG…QLDPEDMDEI (168 aa)) is the Helicase C-terminal domain.

It belongs to the DEAD box helicase family. In terms of processing, phosphorylated on threonine residues. The phosphorylated form is found in the cytoplasm but not in the nucleus.

The protein localises to the cytoplasm. It is found in the nucleus. It carries out the reaction ATP + H2O = ADP + phosphate + H(+). Its function is as follows. ATP-dependent RNA helicase. Required for mRNA export and translation regulation during spermatid development. In Bos taurus (Bovine), this protein is ATP-dependent RNA helicase DDX25 (DDX25).